The sequence spans 391 residues: Multidrug resistance protein MdtL (391 aa).

A run of 12 helical transmembrane segments spans residues 4–24 (FLIC…MYLV), 42–62 (IAFS…GKVA), 69–89 (PVAI…SLAE), 93–113 (LFLA…VVAF), 131–151 (LLNG…HLIM), 158–178 (SLFW…LFIL), 203–222 (FFLS…LTFV), 245–265 (ALTA…LGIF), 269–289 (TLMI…AVSP), 293–313 (VSLF…GVAM), 331–351 (LGIA…VVGI), and 356–376 (MLIG…MFVA).

It belongs to the major facilitator superfamily. DHA1 family. MdtL (TC 2.A.1.2.22) subfamily.

It is found in the cell inner membrane. Its function is as follows. Confers resistance to chloramphenicol. This chain is Multidrug resistance protein MdtL, found in Escherichia coli O45:K1 (strain S88 / ExPEC).